A 545-amino-acid chain; its full sequence is CTP synthase (545 aa).

An amidoligase domain region spans residues 1–266 (MITNYIFVTG…DQYICDKFNL (266 aa)). Residue S14 coordinates CTP. Residue S14 coordinates UTP. ATP contacts are provided by residues 15 to 20 (SLGKGI) and D72. Positions 72 and 140 each coordinate Mg(2+). CTP contacts are provided by residues 147 to 149 (DIE), 187 to 192 (KTKPTQ), and K223. UTP contacts are provided by residues 187 to 192 (KTKPTQ) and K223. 239 to 241 (KDV) is a binding site for ATP. Positions 291–542 (SIGMVGKYIE…VKSALAHHQD (252 aa)) constitute a Glutamine amidotransferase type-1 domain. G352 is an L-glutamine binding site. Residue C379 is the Nucleophile; for glutamine hydrolysis of the active site. L-glutamine-binding positions include 380–383 (LGMQ), E403, and R470. Active-site residues include H515 and E517.

The protein belongs to the CTP synthase family. As to quaternary structure, homotetramer.

It catalyses the reaction UTP + L-glutamine + ATP + H2O = CTP + L-glutamate + ADP + phosphate + 2 H(+). It carries out the reaction L-glutamine + H2O = L-glutamate + NH4(+). The enzyme catalyses UTP + NH4(+) + ATP = CTP + ADP + phosphate + 2 H(+). Its pathway is pyrimidine metabolism; CTP biosynthesis via de novo pathway; CTP from UDP: step 2/2. With respect to regulation, allosterically activated by GTP, when glutamine is the substrate; GTP has no effect on the reaction when ammonia is the substrate. The allosteric effector GTP functions by stabilizing the protein conformation that binds the tetrahedral intermediate(s) formed during glutamine hydrolysis. Inhibited by the product CTP, via allosteric rather than competitive inhibition. Functionally, catalyzes the ATP-dependent amination of UTP to CTP with either L-glutamine or ammonia as the source of nitrogen. Regulates intracellular CTP levels through interactions with the four ribonucleotide triphosphates. The protein is CTP synthase of Hamiltonella defensa subsp. Acyrthosiphon pisum (strain 5AT).